Consider the following 194-residue polypeptide: Peptide deformylase (194 aa).

Positions 71 to 93 (DAEPEECGHDHGDGEGAHKHYPV) are disordered. A compositionally biased stretch (basic and acidic residues) spans 76-93 (ECGHDHGDGEGAHKHYPV). Positions 119 and 161 each coordinate Fe cation. The active site involves Glu-162. A Fe cation-binding site is contributed by His-165.

The protein belongs to the polypeptide deformylase family. Requires Fe(2+) as cofactor.

It catalyses the reaction N-terminal N-formyl-L-methionyl-[peptide] + H2O = N-terminal L-methionyl-[peptide] + formate. Functionally, removes the formyl group from the N-terminal Met of newly synthesized proteins. Requires at least a dipeptide for an efficient rate of reaction. N-terminal L-methionine is a prerequisite for activity but the enzyme has broad specificity at other positions. In Erythrobacter litoralis (strain HTCC2594), this protein is Peptide deformylase.